The primary structure comprises 421 residues: Lipid II:glycine glycyltransferase (421 aa).

The protein belongs to the FemABX family. In terms of assembly, monomer.

The protein localises to the cytoplasm. It catalyses the reaction beta-D-GlcNAc-(1-&gt;4)-Mur2Ac(oyl-L-Ala-D-isoglutaminyl-L-Lys-D-Ala-D-Ala)-di-trans,octa-cis-undecaprenyl diphosphate + glycyl-tRNA(Gly) = beta-D-GlcNAc-(1-&gt;4)-Mur2Ac(oyl-L-Ala-D-isoglutaminyl-L-Lys-(N(6)-Gly)-D-Ala-D-Ala)-di-trans,octa-cis-undecaprenyl diphosphate + tRNA(Gly) + H(+). Catalyzes the incorporation of the first glycine of the pentaglycine interpeptide bridge, which is characteristic of the S.aureus peptidoglycan. This glycine is added to the epsilon-amino group of the L-lysine of the membrane-bound lipid II intermediate (GlcNAc-(beta-1,4)-N-acetylmuramic acid(-L-Ala-D-iGln-L-Lys-D-Ala-D-Ala)-pyrophosphoryl-undecaprenol), using glycyl-tRNA(Gly) as donor, in a ribosome-independent mechanism. The sequence is that of Lipid II:glycine glycyltransferase (femX) from Staphylococcus aureus (strain MSSA476).